The chain runs to 64 residues: Anti-sigma-G factor Gin (64 aa).

Zn(2+) is bound by residues cysteine 11, cysteine 14, cysteine 30, and cysteine 33.

In terms of assembly, probably functions as a homodimer. Interacts with sigma-G factor, recognition occurs via the first 71 residues of sigma-G. Zn(2+) is required as a cofactor.

Functionally, an anti-sigma-G factor, prevents premature activation of sigma-G factor in the forespore; overexpression leads to 1000-fold reduction in spore formation, spore formation stops after engulfment. Overexpression also inhibits sigma-G transcription activation activity. When both Gin and sigma-G are expressed in E.coli Gin inhibits sigma-G, strongly suggesting Gin inhibits by direct physical interaction. In Bacillus subtilis (strain 168), this protein is Anti-sigma-G factor Gin.